Reading from the N-terminus, the 124-residue chain is MPTISQLVGSERKRLTKKTKSPALKSCPERRGVCTRVYTSTPKKPNSALRKVARVRLTSGFEVTAYIPGIGHNLQEHSVVLLRGGRVKDLPGVRYHIIRGTLDTAGVKDRRQSRSKYGAKAPKD.

The disordered stretch occupies residues 1–28; the sequence is MPTISQLVGSERKRLTKKTKSPALKSCP. At D89 the chain carries 3-methylthioaspartic acid. The disordered stretch occupies residues 104–124; the sequence is TAGVKDRRQSRSKYGAKAPKD.

Belongs to the universal ribosomal protein uS12 family. In terms of assembly, part of the 30S ribosomal subunit. Contacts proteins S8 and S17. May interact with IF1 in the 30S initiation complex.

In terms of biological role, with S4 and S5 plays an important role in translational accuracy. Functionally, interacts with and stabilizes bases of the 16S rRNA that are involved in tRNA selection in the A site and with the mRNA backbone. Located at the interface of the 30S and 50S subunits, it traverses the body of the 30S subunit contacting proteins on the other side and probably holding the rRNA structure together. The combined cluster of proteins S8, S12 and S17 appears to hold together the shoulder and platform of the 30S subunit. The protein is Small ribosomal subunit protein uS12 of Prochlorococcus marinus (strain MIT 9301).